A 429-amino-acid polypeptide reads, in one-letter code: 5-methylthioadenosine/S-adenosylhomocysteine deaminase (429 aa).

Residues H65 and H67 each contribute to the Zn(2+) site. Residues E94 and H182 each coordinate substrate. Zn(2+) is bound at residue H209. Positions 212 and 297 each coordinate substrate. D297 is a binding site for Zn(2+).

Belongs to the metallo-dependent hydrolases superfamily. MTA/SAH deaminase family. Requires Zn(2+) as cofactor.

The catalysed reaction is S-adenosyl-L-homocysteine + H2O + H(+) = S-inosyl-L-homocysteine + NH4(+). It carries out the reaction S-methyl-5'-thioadenosine + H2O + H(+) = S-methyl-5'-thioinosine + NH4(+). Its function is as follows. Catalyzes the deamination of 5-methylthioadenosine and S-adenosyl-L-homocysteine into 5-methylthioinosine and S-inosyl-L-homocysteine, respectively. Is also able to deaminate adenosine. This Clostridium tetani (strain Massachusetts / E88) protein is 5-methylthioadenosine/S-adenosylhomocysteine deaminase.